The following is a 256-amino-acid chain: MSNLTARVIPCLDIKDGRVVKGVNFVDLVDAGDPVESAGIYEENLADELCFLDITASSDRREILLHLVERIAEKIFIPFTVGGGIRTVADVKAVLEKGADKISINTAAFQNPELLTHSSEIYGSQCIVCAIDVKFQKERDRYEIFLHGGRTETGREALDWAREAVGRGAGEILLTSMDRDGTRNGFDINLLKSFSSSLEIPIIASGGAGNPEHMVEAILRGKADAVLAASIFHFGEYSIRETKRAMQEMGISVRLD.

Catalysis depends on residues D13 and D132.

The protein belongs to the HisA/HisF family. As to quaternary structure, heterodimer of HisH and HisF.

Its subcellular location is the cytoplasm. The enzyme catalyses 5-[(5-phospho-1-deoxy-D-ribulos-1-ylimino)methylamino]-1-(5-phospho-beta-D-ribosyl)imidazole-4-carboxamide + L-glutamine = D-erythro-1-(imidazol-4-yl)glycerol 3-phosphate + 5-amino-1-(5-phospho-beta-D-ribosyl)imidazole-4-carboxamide + L-glutamate + H(+). It participates in amino-acid biosynthesis; L-histidine biosynthesis; L-histidine from 5-phospho-alpha-D-ribose 1-diphosphate: step 5/9. IGPS catalyzes the conversion of PRFAR and glutamine to IGP, AICAR and glutamate. The HisF subunit catalyzes the cyclization activity that produces IGP and AICAR from PRFAR using the ammonia provided by the HisH subunit. The polypeptide is Imidazole glycerol phosphate synthase subunit HisF (Leptospira borgpetersenii serovar Hardjo-bovis (strain JB197)).